The primary structure comprises 119 residues: MLLKSTTRHIRIYTAEIQNNELVESDNVLTLDVDPDNEFLWDEDSLQKVYRKFDDLVESYSGEDLTEYNLRRIGSDLELFIRSLLQQGEISYNLDSRVLNYSMGLPRVESPETEGKYRL.

This sequence belongs to the complex I NdhM subunit family. NDH-1 can be composed of about 15 different subunits; different subcomplexes with different compositions have been identified which probably have different functions.

It localises to the cellular thylakoid membrane. The enzyme catalyses a plastoquinone + NADH + (n+1) H(+)(in) = a plastoquinol + NAD(+) + n H(+)(out). The catalysed reaction is a plastoquinone + NADPH + (n+1) H(+)(in) = a plastoquinol + NADP(+) + n H(+)(out). Its function is as follows. NDH-1 shuttles electrons from an unknown electron donor, via FMN and iron-sulfur (Fe-S) centers, to quinones in the respiratory and/or the photosynthetic chain. The immediate electron acceptor for the enzyme in this species is believed to be plastoquinone. Couples the redox reaction to proton translocation, and thus conserves the redox energy in a proton gradient. Cyanobacterial NDH-1 also plays a role in inorganic carbon-concentration. The chain is NAD(P)H-quinone oxidoreductase subunit M from Gloeothece citriformis (strain PCC 7424) (Cyanothece sp. (strain PCC 7424)).